A 653-amino-acid polypeptide reads, in one-letter code: Beta-galactosidase (653 aa).

The first 22 residues, 1-22, serve as a signal peptide directing secretion; it reads MPGVVRLLALLLVPLLLGSARG. The propeptide occupies 23-27; sequence LHNAT. N-linked (GlcNAc...) asparagine glycosylation is present at asparagine 25. Tyrosine 82 is a substrate binding site. N-linked (GlcNAc...) asparagine glycosylation is present at asparagine 96. The substrate site is built by glutamate 128 and asparagine 186. Glutamate 187 serves as the catalytic Proton donor. A disulfide bridge links cysteine 194 with cysteine 229. Residue asparagine 246 is glycosylated (N-linked (GlcNAc...) asparagine). Glutamate 267 functions as the Nucleophile in the catalytic mechanism. Substrate is bound at residue tyrosine 332. N-linked (GlcNAc...) asparagine glycans are attached at residues asparagine 463, asparagine 497, and asparagine 554. Cysteine 625 and cysteine 633 are oxidised to a cystine.

This sequence belongs to the glycosyl hydrolase 35 family. As to quaternary structure, homodimer. May form higher multimers.

It localises to the lysosome. The catalysed reaction is Hydrolysis of terminal non-reducing beta-D-galactose residues in beta-D-galactosides.. Functionally, cleaves beta-linked terminal galactosyl residues from gangliosides, glycoproteins, and glycosaminoglycans. In Bos taurus (Bovine), this protein is Beta-galactosidase (GLB1).